The primary structure comprises 205 residues: MAIKIGITGGIGSGKSVVSHLLEVMGVPVYISDEESKKVVATDPVIRKELCDLVGEEVFFGGKLNKTLLATYLFASSTHASQVNGIIHPRVKEHFRQWSSHKDCLDIIGMESAILIESGFADEVDCIVMVYAPLELRVERAVRRDNASCEQIMQRIRSQMSDEEKCERASFVIINDGEKPLIPQILELIAFLYQKIHYLCSAKNN.

A DPCK domain is found at 4–203; it reads KIGITGGIGS…QKIHYLCSAK (200 aa). ATP is bound at residue 12–17; it reads GSGKSV.

Belongs to the CoaE family.

It localises to the cytoplasm. The catalysed reaction is 3'-dephospho-CoA + ATP = ADP + CoA + H(+). It functions in the pathway cofactor biosynthesis; coenzyme A biosynthesis; CoA from (R)-pantothenate: step 5/5. Functionally, catalyzes the phosphorylation of the 3'-hydroxyl group of dephosphocoenzyme A to form coenzyme A. This is Dephospho-CoA kinase from Bacteroides fragilis (strain ATCC 25285 / DSM 2151 / CCUG 4856 / JCM 11019 / LMG 10263 / NCTC 9343 / Onslow / VPI 2553 / EN-2).